A 230-amino-acid polypeptide reads, in one-letter code: Flavin-dependent thymidylate synthase (230 aa).

Positions 1 to 217 constitute a ThyX domain; it reads MEIKVLEKGF…PVTYEAFLNF (217 aa). FAD contacts are provided by residues Ser55, 78 to 80, and Glu86; that span reads RHR. DUMP is bound by residues 75 to 78, 86 to 90, and Arg156; these read QLVR and ERSGR. A ThyX motif motif is present at residues 78-88; the sequence is RHRIASINERS. FAD contacts are provided by residues 172–174 and Asn178; that span reads NAR. Arg183 provides a ligand contact to dUMP. Arg183 acts as the Involved in ionization of N3 of dUMP, leading to its activation in catalysis.

Belongs to the thymidylate synthase ThyX family. Homotetramer. The cofactor is FAD.

It catalyses the reaction dUMP + (6R)-5,10-methylene-5,6,7,8-tetrahydrofolate + NADPH + H(+) = dTMP + (6S)-5,6,7,8-tetrahydrofolate + NADP(+). It functions in the pathway pyrimidine metabolism; dTTP biosynthesis. In terms of biological role, catalyzes the reductive methylation of 2'-deoxyuridine-5'-monophosphate (dUMP) to 2'-deoxythymidine-5'-monophosphate (dTMP) while utilizing 5,10-methylenetetrahydrofolate (mTHF) as the methyl donor, and NADPH and FADH(2) as the reductant. The sequence is that of Flavin-dependent thymidylate synthase from Kosmotoga olearia (strain ATCC BAA-1733 / DSM 21960 / TBF 19.5.1).